We begin with the raw amino-acid sequence, 191 residues long: CASP-like protein 1D1 (191 aa).

The Cytoplasmic portion of the chain corresponds to 1–22 (MTSTSKDTPESGYAVPPPNLFG). The helical transmembrane segment at 23 to 43 (VDFGLRLLLLASAVSALVVLV) threads the bilayer. Topologically, residues 44-73 (TSKQTESIPTSLPPPFPAFISRDAKFQHSP) are extracellular. A helical transmembrane segment spans residues 74 to 94 (AFIYLLVALSVTCFYSIITMV). The Cytoplasmic segment spans residues 95–118 (ASFAAITSPSSSPRMLFHLVLSDA). The helical transmembrane segment at 119 to 139 (VMAGVMASAAGTAGSVAYLGL) threads the bilayer. Topologically, residues 140-160 (KGNSHVNWNKVCNVYDKFCRH) are extracellular. Residues 161–181 (VGSSAAVSLVASVLLVSLVVL) form a helical membrane-spanning segment. Over 182 to 191 (SSYSLYRRCR) the chain is Cytoplasmic.

Belongs to the Casparian strip membrane proteins (CASP) family. Homodimer and heterodimers.

Its subcellular location is the cell membrane. The protein is CASP-like protein 1D1 of Musa acuminata (Banana).